Here is a 615-residue protein sequence, read N- to C-terminus: Pentatricopeptide repeat-containing protein At2g25580 (615 aa).

Residues 40 to 98 form a disordered region; the sequence is FGNSNDSSEMNPREGYNGRIQNRTGSSGEVSESIHTQSQSLGSNQGRNEQSWKQSPSLS. The span at 58 to 98 shows a compositional bias: polar residues; sequence RIQNRTGSSGEVSESIHTQSQSLGSNQGRNEQSWKQSPSLS. PPR repeat units lie at residues 288-318, 319-353, 354-389, and 390-420; these read DLSSNHVLLEMYSNCGLANEAASVFEKMSEK, NLETWCIIIRCFAKNGFGEDAIDMFSRFKEEGNIP, DGQLFRGIFYACGMLGDVDEGLLHFESMSRDYGIAP, and SIEDYVSLVEMYALPGFLDEALEFVERMPME. The segment at 490–520 is type E(+) motif; sequence SSMQEFRAGDTNLPENDELFQLLRNLKMHMV. The segment at 521-615 is type DYW motif; the sequence is EVGYVAETRM…NGACTCKDYW (95 aa).

This sequence belongs to the PPR family. PCMP-H subfamily.

This is Pentatricopeptide repeat-containing protein At2g25580 (PCMP-H75) from Arabidopsis thaliana (Mouse-ear cress).